A 1374-amino-acid polypeptide reads, in one-letter code: Tripeptidyl-peptidase 2 (1374 aa).

Positions 62–558 (ALLLNKTDTE…QGMIKIATAY (497 aa)) constitute a Peptidase S8 domain. Residues D93, H314, and S499 each act as charge relay system in the active site.

It belongs to the peptidase S8 family. In terms of tissue distribution, expressed in intestinal fat-storing cells and some head neurons.

The catalysed reaction is Release of an N-terminal tripeptide from a polypeptide.. Component of the proteolytic cascade acting downstream of the 26S proteasome in the ubiquitin-proteasome pathway. Has a role in regulation of fat storage. In Caenorhabditis elegans, this protein is Tripeptidyl-peptidase 2 (tpp-2).